A 116-amino-acid polypeptide reads, in one-letter code: MGLPLTFDDNNQCLLLLDSDIFTSIEAKDDIWLLNGMIIPLSPVCGDSIWRQIMVINGELAANNEGTLAYIDAAETLLFIHAITDLTNIYHIISQLESFVNKQEALKNILQEYAKV.

The protein belongs to the SicP family.

The protein resides in the cytoplasm. Functionally, molecular chaperone required for SptP stabilization and secretion. The polypeptide is Chaperone protein SicP (sicP) (Salmonella paratyphi A (strain ATCC 9150 / SARB42)).